The chain runs to 272 residues: Ribosomal RNA small subunit methyltransferase A (272 aa).

Residues Asn27, Leu29, Gly54, Glu75, Asp97, and Asn117 each coordinate S-adenosyl-L-methionine.

It belongs to the class I-like SAM-binding methyltransferase superfamily. rRNA adenine N(6)-methyltransferase family. RsmA subfamily.

The protein localises to the cytoplasm. The enzyme catalyses adenosine(1518)/adenosine(1519) in 16S rRNA + 4 S-adenosyl-L-methionine = N(6)-dimethyladenosine(1518)/N(6)-dimethyladenosine(1519) in 16S rRNA + 4 S-adenosyl-L-homocysteine + 4 H(+). Functionally, specifically dimethylates two adjacent adenosines (A1518 and A1519) in the loop of a conserved hairpin near the 3'-end of 16S rRNA in the 30S particle. May play a critical role in biogenesis of 30S subunits. The polypeptide is Ribosomal RNA small subunit methyltransferase A (Malacoplasma penetrans (strain HF-2) (Mycoplasma penetrans)).